The primary structure comprises 247 residues: ATP synthase subunit a, chloroplastic (247 aa).

5 consecutive transmembrane segments (helical) span residues 38 to 58, 95 to 115, 134 to 154, 199 to 219, and 220 to 240; these read QVLI…TIAV, VPFI…GALL, INTT…AGLT, LVVV…VMFL, and GLFT…AYIG.

It belongs to the ATPase A chain family. In terms of assembly, F-type ATPases have 2 components, CF(1) - the catalytic core - and CF(0) - the membrane proton channel. CF(1) has five subunits: alpha(3), beta(3), gamma(1), delta(1), epsilon(1). CF(0) has four main subunits: a, b, b' and c.

It localises to the plastid. Its subcellular location is the chloroplast thylakoid membrane. Key component of the proton channel; it plays a direct role in the translocation of protons across the membrane. The protein is ATP synthase subunit a, chloroplastic of Buxus microphylla (Littleleaf boxwood).